A 153-amino-acid polypeptide reads, in one-letter code: UPF0756 membrane protein BCQ_4399 (153 aa).

The next 4 membrane-spanning stretches (helical) occupy residues 8 to 28 (FLFI…TVAI), 54 to 74 (LGVT…EIGF), 87 to 107 (WIAL…VQLL), and 117 to 137 (LVFG…GPLI).

Belongs to the UPF0756 family.

Its subcellular location is the cell membrane. This Bacillus cereus (strain Q1) protein is UPF0756 membrane protein BCQ_4399.